The sequence spans 183 residues: Ribosome-recycling factor (183 aa).

Belongs to the RRF family.

It localises to the cytoplasm. Functionally, responsible for the release of ribosomes from messenger RNA at the termination of protein biosynthesis. May increase the efficiency of translation by recycling ribosomes from one round of translation to another. The polypeptide is Ribosome-recycling factor (Treponema pallidum (strain Nichols)).